Reading from the N-terminus, the 481-residue chain is Aspartyl/glutamyl-tRNA(Asn/Gln) amidotransferase subunit B (481 aa).

It belongs to the GatB/GatE family. GatB subfamily. As to quaternary structure, heterotrimer of A, B and C subunits.

It carries out the reaction L-glutamyl-tRNA(Gln) + L-glutamine + ATP + H2O = L-glutaminyl-tRNA(Gln) + L-glutamate + ADP + phosphate + H(+). It catalyses the reaction L-aspartyl-tRNA(Asn) + L-glutamine + ATP + H2O = L-asparaginyl-tRNA(Asn) + L-glutamate + ADP + phosphate + 2 H(+). Its function is as follows. Allows the formation of correctly charged Asn-tRNA(Asn) or Gln-tRNA(Gln) through the transamidation of misacylated Asp-tRNA(Asn) or Glu-tRNA(Gln) in organisms which lack either or both of asparaginyl-tRNA or glutaminyl-tRNA synthetases. The reaction takes place in the presence of glutamine and ATP through an activated phospho-Asp-tRNA(Asn) or phospho-Glu-tRNA(Gln). In Pseudomonas syringae pv. tomato (strain ATCC BAA-871 / DC3000), this protein is Aspartyl/glutamyl-tRNA(Asn/Gln) amidotransferase subunit B.